The following is a 204-amino-acid chain: LexA repressor (204 aa).

A DNA-binding region (H-T-H motif) is located at residues 27–47; it reads VREIGEAVGLASSSTVHGHLA. Residues serine 126 and lysine 164 each act as for autocatalytic cleavage activity in the active site.

The protein belongs to the peptidase S24 family. In terms of assembly, homodimer.

The catalysed reaction is Hydrolysis of Ala-|-Gly bond in repressor LexA.. Its function is as follows. Represses a number of genes involved in the response to DNA damage (SOS response), including recA and lexA. In the presence of single-stranded DNA, RecA interacts with LexA causing an autocatalytic cleavage which disrupts the DNA-binding part of LexA, leading to derepression of the SOS regulon and eventually DNA repair. In Listeria monocytogenes serotype 4b (strain CLIP80459), this protein is LexA repressor.